We begin with the raw amino-acid sequence, 188 residues long: Adenine phosphoribosyltransferase (188 aa).

Belongs to the purine/pyrimidine phosphoribosyltransferase family. Homodimer.

Its subcellular location is the cytoplasm. The enzyme catalyses AMP + diphosphate = 5-phospho-alpha-D-ribose 1-diphosphate + adenine. It participates in purine metabolism; AMP biosynthesis via salvage pathway; AMP from adenine: step 1/1. In terms of biological role, catalyzes a salvage reaction resulting in the formation of AMP, that is energically less costly than de novo synthesis. The sequence is that of Adenine phosphoribosyltransferase from Burkholderia thailandensis (strain ATCC 700388 / DSM 13276 / CCUG 48851 / CIP 106301 / E264).